Consider the following 230-residue polypeptide: Capsid protein (230 aa).

A compositionally biased stretch (low complexity) spans 19–48 (PPTSDAASPSADQPAVSSSRSDSRLVSAPL). The disordered stretch occupies residues 19–54 (PPTSDAASPSADQPAVSSSRSDSRLVSAPLPAAPPA).

The protein belongs to the tymoviruses capsid protein family.

The protein localises to the virion. Its function is as follows. Self-assembles to form a T=3 icosahedral capsid composed of 180 copies of the capsid protein. The capsid encapsulates the single-stranded RNA genome. The sequence is that of Capsid protein from Grapevine fleck virus (isolate Italy/MT48) (GFkV).